A 21-amino-acid chain; its full sequence is Endo-1,4-beta-xylanase A (21 aa).

Belongs to the glycosyl hydrolase 10 (cellulase F) family.

The catalysed reaction is Endohydrolysis of (1-&gt;4)-beta-D-xylosidic linkages in xylans.. The protein operates within glycan degradation; xylan degradation. The chain is Endo-1,4-beta-xylanase A from Dictyoglomus sp. (strain B4A).